The primary structure comprises 343 residues: GTPase Obg (343 aa).

An Obg domain is found at 2–160; it reads EKFVDRVKIF…RWIILELKLI (159 aa). The OBG-type G domain maps to 161-332; sequence ADVGLVGFPN…LKEGLWKKYE (172 aa). Residues 167-174, 192-196, 214-217, 284-287, and 313-315 each bind GTP; these read GFPNAGKS, FTTLS, DIPG, NKID, and SAL. S174 and T194 together coordinate Mg(2+).

It belongs to the TRAFAC class OBG-HflX-like GTPase superfamily. OBG GTPase family. In terms of assembly, monomer. Mg(2+) serves as cofactor.

It is found in the cytoplasm. Functionally, an essential GTPase which binds GTP, GDP and possibly (p)ppGpp with moderate affinity, with high nucleotide exchange rates and a fairly low GTP hydrolysis rate. Plays a role in control of the cell cycle, stress response, ribosome biogenesis and in those bacteria that undergo differentiation, in morphogenesis control. This is GTPase Obg from Aquifex aeolicus (strain VF5).